Consider the following 115-residue polypeptide: uncharacterized protein (115 aa).

3 helical membrane-spanning segments follow: residues 6-26 (ILIILVIILTTYFTRIWPFMV), 43-63 (ALSCSVIGMLVIYCFKDIHIL), and 84-104 (IFKVFVLSITLPTILYMVLVQ).

Belongs to the AzlD/HI_1737/HP1330 family.

It localises to the cell membrane. This is an uncharacterized protein from Helicobacter pylori (strain ATCC 700392 / 26695) (Campylobacter pylori).